The following is an 874-amino-acid chain: Ectonucleotide pyrophosphatase/phosphodiesterase family member 3 (874 aa).

At 1-11 (MQSTLNLSTEE) the chain is on the cytoplasmic side. Residues 12–30 (PVKRNTVKKYKIICIVLLI) traverse the membrane as a helical; Signal-anchor for type II membrane protein segment. Residues 31 to 874 (LLVAVSLALG…TYLPVFETVI (844 aa)) are Extracellular-facing. 2 consecutive SMB domains span residues 50–93 (EQGS…VQST) and 94–138 (QIWT…GETS). Cystine bridges form between Cys-54–Cys-71, Cys-58–Cys-89, Cys-69–Cys-82, Cys-75–Cys-81, Cys-98–Cys-115, Cys-103–Cys-133, Cys-113–Cys-126, Cys-119–Cys-125, Cys-144–Cys-190, and Cys-152–Cys-364. The Cell attachment site motif lies at 78-80 (RGD). Positions 160-544 (PVILFSMDGF…HGSLNHLLKV (385 aa)) are phosphodiesterase. Zn(2+) is bound at residue Asp-167. Lys-204 is an ATP binding site. Residue Thr-205 participates in Zn(2+) binding. The Nucleophile role is filled by Thr-205. Asn-226 is an ATP binding site. Asn-236 carries N-linked (GlcNAc...) asparagine glycosylation. Asp-275 is an ATP binding site. Asn-279 carries N-linked (GlcNAc...) asparagine glycosylation. Tyr-289 provides a ligand contact to ATP. N-linked (GlcNAc...) asparagine glycosylation is present at Asn-290. Residues Asp-325, His-329, Asp-372, and His-373 each coordinate Zn(2+). Cystine bridges form between Cys-380–Cys-477, Cys-428–Cys-817, Cys-561–Cys-622, Cys-574–Cys-678, Cys-576–Cys-663, and Cys-786–Cys-796. Asn-425 carries an N-linked (GlcNAc...) asparagine glycan. His-482 serves as a coordination point for Zn(2+). N-linked (GlcNAc...) asparagine glycosylation is present at Asn-532. Residues 581–874 (TNSDLERVNQ…TYLPVFETVI (294 aa)) are nuclease. 3 N-linked (GlcNAc...) asparagine glycosylation sites follow: Asn-677, Asn-686, and Asn-698. Asp-751, Asp-755, His-757, and Asp-759 together coordinate Ca(2+). Residues Asn-770, Asn-788, and Asn-820 are each glycosylated (N-linked (GlcNAc...) asparagine).

This sequence belongs to the nucleotide pyrophosphatase/phosphodiesterase family. As to quaternary structure, monomer and homodimer. It depends on Zn(2+) as a cofactor. In terms of processing, N-glycosylated. N-glycosylation is necessary for normal transport to the cell membrane, but is not the apical targeting signal.

Its subcellular location is the cell membrane. The protein localises to the apical cell membrane. The protein resides in the secreted. The enzyme catalyses a ribonucleoside 5'-triphosphate + H2O = a ribonucleoside 5'-phosphate + diphosphate + H(+). It catalyses the reaction ATP + H2O = AMP + diphosphate + H(+). It carries out the reaction CTP + H2O = CMP + diphosphate + H(+). The catalysed reaction is GTP + H2O = GMP + diphosphate + H(+). The enzyme catalyses UTP + H2O = UMP + diphosphate + H(+). It catalyses the reaction UDP-N-acetyl-alpha-D-glucosamine + H2O = N-acetyl-alpha-D-glucosamine 1-phosphate + UMP + 2 H(+). It carries out the reaction P(1),P(3)-bis(5'-adenosyl) triphosphate + H2O = AMP + ADP + 2 H(+). The catalysed reaction is P(1),P(4)-bis(5'-adenosyl) tetraphosphate + H2O = AMP + ATP + 2 H(+). The enzyme catalyses P(1),P(5)-bis(5'-adenosyl) pentaphosphate + H2O = adenosine 5'-tetraphosphate + AMP + 2 H(+). It catalyses the reaction P(1),P(4)-bis(5'-guanosyl) tetraphosphate + H2O = GMP + GTP + 2 H(+). It carries out the reaction Hydrolytically removes 5'-nucleotides successively from the 3'-hydroxy termini of 3'-hydroxy-terminated oligonucleotides.. Its function is as follows. Hydrolase that metabolizes extracellular nucleotides, including ATP, GTP, UTP and CTP. Limits mast cells and basophils response during inflammation and during the chronic phases of allergic responses by eliminating extracellular ATP, a signaling molecule activating these cells in an autocrine manner. Metabolizes extracellular ATP in the lumen of the small intestine, and thereby prevents ATP-induced apoptosis of intestinal plasmacytoid dendritic cells. Has a broad specificity and can also hydrolyze UDP-GlcNAc into UMP and GlcNAc-1-phosphate and potentially several other intracellular nucleotide sugars, including UDP-GalNAc, CMP-NeuAc, GDP-Fuc, and UDP-GlcA. Thereby, could modulate glycan biosynthesis and protein glycosylation. Can hydrolyze extracellular dinucleoside polyphosphates, including the vasoactive adenosine polyphosphates as well. In addition, displays an alkaline phosphodiesterase activity in vitro. This chain is Ectonucleotide pyrophosphatase/phosphodiesterase family member 3 (ENPP3), found in Bos taurus (Bovine).